A 901-amino-acid chain; its full sequence is Probable dipeptidyl-aminopeptidase B (901 aa).

Low complexity predominate over residues 1-22 (MSSPRPSTSSTSSDSGLSVDTT). Positions 1 to 67 (MSSPRPSTSS…EPFLPSAKKQ (67 aa)) are disordered. Topologically, residues 1–76 (MSSPRPSTSS…QAASGSRTSR (76 aa)) are cytoplasmic. The chain crosses the membrane as a helical; Signal-anchor for type II membrane protein span at residues 77 to 97 (LIWGLVILCVAGWLWGLVLFV). At 98–901 (TQNRSAQQSV…VKRSLPMLVK (804 aa)) the chain is on the vacuolar side. N-linked (GlcNAc...) asparagine glycans are attached at residues asparagine 334 and asparagine 625. Residue serine 739 is the Charge relay system of the active site. The N-linked (GlcNAc...) asparagine glycan is linked to asparagine 793. Active-site charge relay system residues include aspartate 816 and histidine 849.

The protein belongs to the peptidase S9B family.

It localises to the vacuole membrane. The enzyme catalyses Release of an N-terminal dipeptide, Xaa-Yaa-|-Zaa-, from a polypeptide, preferentially when Yaa is Pro, provided Zaa is neither Pro nor hydroxyproline.. Functionally, type IV dipeptidyl-peptidase which removes N-terminal dipeptides sequentially from polypeptides having unsubstituted N-termini provided that the penultimate residue is proline. The chain is Probable dipeptidyl-aminopeptidase B (dapB) from Aspergillus niger (strain ATCC MYA-4892 / CBS 513.88 / FGSC A1513).